Here is a 367-residue protein sequence, read N- to C-terminus: Probable L-aspartate decarboxylase (367 aa).

The residue at position 216 (K216) is an N6-(pyridoxal phosphate)lysine.

The protein belongs to the group II decarboxylase family. MfnA subfamily. The cofactor is pyridoxal 5'-phosphate.

The catalysed reaction is L-aspartate + H(+) = beta-alanine + CO2. It participates in cofactor biosynthesis; coenzyme A biosynthesis. Catalyzes the decarboxylation of L-aspartate to produce beta-alanine. The chain is Probable L-aspartate decarboxylase from Archaeoglobus fulgidus (strain ATCC 49558 / DSM 4304 / JCM 9628 / NBRC 100126 / VC-16).